Consider the following 208-residue polypeptide: UPF0323 lipoprotein HH_0014 (208 aa).

An N-terminal signal peptide occupies residues 1 to 26 (MKHIHKIKNYAMVGGLGVMAVFALNA). Residue Cys27 is the site of N-palmitoyl cysteine attachment. A lipid anchor (S-diacylglycerol cysteine) is attached at Cys27. The interval 148 to 208 (ANSQRNYKSP…TNRNTGSMGS (61 aa)) is disordered. Low complexity-rich tracts occupy residues 169-185 (SAKTGASGASKTSSGKS) and 193-208 (SSQSTSTNRNTGSMGS).

It belongs to the UPF0323 family.

Its subcellular location is the cell membrane. In Helicobacter hepaticus (strain ATCC 51449 / 3B1), this protein is UPF0323 lipoprotein HH_0014.